A 265-amino-acid chain; its full sequence is Secreted RxLR effector protein 146 (265 aa).

The first 25 residues, 1-25, serve as a signal peptide directing secretion; the sequence is MRYYTQVVAASLVATLAVVDSIVFA. The RxLR-dEER signature appears at 32 to 50; sequence RFLRQDGATVTRGGKGEER. Residues Asn71 and Asn148 are each glycosylated (N-linked (GlcNAc...) asparagine).

This sequence belongs to the RxLR effector family.

It is found in the secreted. Its subcellular location is the host nucleus. The protein localises to the host cytoplasm. Its function is as follows. Secreted effector that completely suppresses the host cell death induced by cell death-inducing proteins. The polypeptide is Secreted RxLR effector protein 146 (Plasmopara viticola (Downy mildew of grapevine)).